Reading from the N-terminus, the 57-residue chain is Small hydrophobic protein (57 aa).

The Virion surface segment spans residues 1 to 8 (MPAIQPPL). A helical membrane pass occupies residues 9–29 (YLTFLLLILLYLIITLYVWTI). Residues 30–57 (LTITYKTTVRYAALYQRSFSRWGFDQSL) are Intravirion-facing.

This sequence belongs to the rubulavirus small hydrophobic protein family. As to quaternary structure, interacts with host TNFRSF1A, RIPK1 and IRAK1; these interactions interfere with host NF-kappa-B activation at the level of receptor complexes. Interacts with host protein UBQLN4.

The protein localises to the virion membrane. It localises to the host cell membrane. Its function is as follows. Plays a role in the inhibition of the host NF-kappa-B pathway. This inhibition occurs at the receptor level, by preventing the signaling of TNFR1 as well as IL-1R and TLR3. The protein is Small hydrophobic protein (SH) of Homo sapiens (Human).